Here is a 249-residue protein sequence, read N- to C-terminus: Probable transcriptional regulatory protein FN1661 (249 aa).

Residues 1 to 10 (MSGHSKWNNI) are compositionally biased toward polar residues. The segment at 1 to 20 (MSGHSKWNNIQHRKGAQDKK) is disordered.

This sequence belongs to the TACO1 family.

It localises to the cytoplasm. In Fusobacterium nucleatum subsp. nucleatum (strain ATCC 25586 / DSM 15643 / BCRC 10681 / CIP 101130 / JCM 8532 / KCTC 2640 / LMG 13131 / VPI 4355), this protein is Probable transcriptional regulatory protein FN1661.